An 820-amino-acid polypeptide reads, in one-letter code: Leucine--tRNA ligase (820 aa).

The short motif at 42–52 is the 'HIGH' region element; it reads PYPSGDLHMGH. The 'KMSKS' region signature appears at 576 to 580; the sequence is KMSKS. ATP is bound at residue Lys-579.

The protein belongs to the class-I aminoacyl-tRNA synthetase family.

It is found in the cytoplasm. It carries out the reaction tRNA(Leu) + L-leucine + ATP = L-leucyl-tRNA(Leu) + AMP + diphosphate. This chain is Leucine--tRNA ligase, found in Coxiella burnetii (strain CbuG_Q212) (Coxiella burnetii (strain Q212)).